The primary structure comprises 87 residues: Putative sodium channel toxin Ts38 (87 aa).

The signal sequence occupies residues 1–22 (MKHLKFYSILFLFSIFVYKVNA). 3 disulfide bridges follow: cysteine 42–cysteine 65, cysteine 51–cysteine 72, and cysteine 55–cysteine 74.

Belongs to the long (3 C-C) scorpion toxin superfamily. Sodium channel inhibitor family. In terms of tissue distribution, expressed by the venom gland.

The protein localises to the secreted. Its function is as follows. Putative sodium channel toxin. This chain is Putative sodium channel toxin Ts38, found in Tityus serrulatus (Brazilian scorpion).